The chain runs to 126 residues: Large ribosomal subunit protein bL12 (126 aa).

It belongs to the bacterial ribosomal protein bL12 family. In terms of assembly, homodimer. Part of the ribosomal stalk of the 50S ribosomal subunit. Forms a multimeric L10(L12)X complex, where L10 forms an elongated spine to which 2 to 4 L12 dimers bind in a sequential fashion. Binds GTP-bound translation factors.

Forms part of the ribosomal stalk which helps the ribosome interact with GTP-bound translation factors. Is thus essential for accurate translation. The polypeptide is Large ribosomal subunit protein bL12 (Rhizobium meliloti (strain 1021) (Ensifer meliloti)).